We begin with the raw amino-acid sequence, 1067 residues long: MPYHLPVLLNPLLNAIFNCPSPKTSSLKQMFSRLDDERFFILVPSTETLLQFQDLESGLELAELCYHYDFVASHIVVIKDPTKDVPDQRSIYNTDFTTLNGRKLSIRYRNSTIVTGDGFTERRKITIKEINLLPTFNDYLKGSNYTPILHISMPLCGDLVPLDELQVFSKVAGNKYSKQEQAPLPFDEEQKKVLYFEQRIQSISDVAERVALTFHLTKARIKKAISVIGIRTEWLNTRDSIRQIISLDKRLNHLEDLDAMIYDYVELKLFTDIQQQLSEIVEDQELEHRFDFKALRSISLNQVPTNFYPKDEKSFSLASVVELEKSVNDALEYLKSIDLKTTHSGKLEVLSTTMRLLSREINGISTDADTLLSLFVLLICRSQVTGLVRTLTYLTNFEISETSIKFGLQGYVLSTFEAALSFFHQDTVDSLTKKCASNKKIWASIQKHSKVEAELLSSNLRIRTDSGESLLSICIQSHNNEVLTTLLANFESEFPLEDILDDRDFALSTLLIQALQVQNSQAAAILSEIILKSCTESEVRSYLNSPNLHNRITAHYIMQDISLLESVGRYFNWEHKDINGHTPLFAVFRSYDAVNYDEIVTKVLDQVVKWYANNNKPFNFKIHEDPKGNTLLHVMKSGIESLLKLPDVNVNKPDSKGLTPLMIYSRYNRITNIETIMKDERLLCDLVQQPLVMTSLDFTKNPKVTKTILDATFNREPVVIHSLRFEERKWKIGIFSEGIFKKYSLDLIQYYLRYLKIMYPCSFHPVQLLTNELRLLGIYGVPGVLRLQSYHTFKKLDMLFSYVNTRGKLWLGKDEEELKVLLDVPTPYLSESERFIKLEPEEINGIQTFLKYNLAEFQKLRNCLIILKKLAIVQQIKHRDVITMRNSFLSLGNQMSQKGVAKSFENTNCAWSYDLSYYEFTRNLEYLEHSVVTLLNNFESLLAKTTLWWKHFGELMELKKEWKKNFPNDKAPPSSANRNFIDTYIEGKRSKFRNKLSNQLKMSSLNLKKIGGEIKTTHESIAVGINLFIEFKEQFYHDHIVKSIVDQRIRENKQIMQQLIDTMKGHV.

A VPS9 domain is found at isoleucine 280 to threonine 432.

Belongs to the UPF0507 family.

This is UPF0507 protein KLLA0D01133g from Kluyveromyces lactis (strain ATCC 8585 / CBS 2359 / DSM 70799 / NBRC 1267 / NRRL Y-1140 / WM37) (Yeast).